Reading from the N-terminus, the 205-residue chain is Guanylate kinase (205 aa).

A Guanylate kinase-like domain is found at 18–196 (PKLFIISAPA…AYQVLRSIFI (179 aa)). Residue 25 to 32 (APAGAGKT) coordinates ATP.

The protein belongs to the guanylate kinase family.

The protein resides in the cytoplasm. It catalyses the reaction GMP + ATP = GDP + ADP. In terms of biological role, essential for recycling GMP and indirectly, cGMP. In Chlamydia trachomatis serovar D (strain ATCC VR-885 / DSM 19411 / UW-3/Cx), this protein is Guanylate kinase (gmk).